The primary structure comprises 257 residues: MAPHDLLTALRDQNPLVHCITNYVAMNIAANVVLAAGASPAMVHAPEEIAEFTPICGALTINIGTISTPWQASMMAAAATASAQNIPWVLDPVAHFISVYRREAAQQLLAQRPTILRGNASEILALTGETGAGKGADSGDSVDAAQGAAKKLAAQFGTVVAITGPVDYLTDGTREAQVSGGSSLMPQVTALGCSQTALMGAYAATGPAFDAALAALAHFKVAGSTAAQRADGPGSFQMHFLDALANTQPFELAQVIR.

Residue methionine 42 participates in substrate binding. The ATP site is built by arginine 117 and threonine 163. Residue alanine 190 participates in substrate binding.

This sequence belongs to the Thz kinase family. It depends on Mg(2+) as a cofactor.

It carries out the reaction 5-(2-hydroxyethyl)-4-methylthiazole + ATP = 4-methyl-5-(2-phosphooxyethyl)-thiazole + ADP + H(+). Its pathway is cofactor biosynthesis; thiamine diphosphate biosynthesis; 4-methyl-5-(2-phosphoethyl)-thiazole from 5-(2-hydroxyethyl)-4-methylthiazole: step 1/1. Catalyzes the phosphorylation of the hydroxyl group of 4-methyl-5-beta-hydroxyethylthiazole (THZ). This chain is Hydroxyethylthiazole kinase, found in Roseobacter denitrificans (strain ATCC 33942 / OCh 114) (Erythrobacter sp. (strain OCh 114)).